The following is a 249-amino-acid chain: CDP-diacylglycerol pyrophosphatase (249 aa).

Residues 5 to 25 (GYFLLAVIVIVAAAGVGYWKF) form a helical membrane-spanning segment.

This sequence belongs to the Cdh family.

The protein localises to the cell inner membrane. The catalysed reaction is a CDP-1,2-diacyl-sn-glycerol + H2O = a 1,2-diacyl-sn-glycero-3-phosphate + CMP + 2 H(+). The protein operates within phospholipid metabolism; CDP-diacylglycerol degradation; phosphatidate from CDP-diacylglycerol: step 1/1. The polypeptide is CDP-diacylglycerol pyrophosphatase (Salmonella arizonae (strain ATCC BAA-731 / CDC346-86 / RSK2980)).